The chain runs to 652 residues: Potassium voltage-gated channel subfamily KQT member 1 (652 aa).

Topologically, residues 1-110 are cytoplasmic; that stretch reads MSSEQPAWTF…YNFLERPTGW (110 aa). A helical membrane pass occupies residues 111–132; sequence KCFVYHFTVFLIVLICLIFSVL. At 133-143 the chain is on the extracellular side; sequence STIQQYNNLAT. The chain crosses the membrane as a helical span at residues 144–166; it reads ETLFWMEIVLVVFFGAEYVVRLW. The Cytoplasmic portion of the chain corresponds to 167 to 182; that stretch reads SAGCRSKYVGVWGRLR. Residues 183-208 form a helical membrane-spanning segment; sequence FARKPISVIDLIVVVASVIVLCVGSN. Over 209 to 216 the chain is Extracellular; the sequence is GQVFATSA. The helical; Voltage-sensor transmembrane segment at 217–232 threads the bilayer; it reads IRGIRFLQILRMLHVD. The interval 228–236 is interaction with KCNE3; it reads MLHVDRQGG. The Cytoplasmic portion of the chain corresponds to 233–250; sequence RQGGTWRLLGSVVFIHRQ. Position 234 (glutamine 234) interacts with a 1,2-diacyl-sn-glycero-3-phospho-(1D-myo-inositol-4,5-bisphosphate). The chain crosses the membrane as a helical span at residues 251-273; sequence ELITTLYIGFLGLIFSSYFVYLA. At 274–289 the chain is on the extracellular side; it reads EKDAIDSSGEYQFGSY. An intramembrane region (pore-forming) is located at residues 290–310; the sequence is ADALWWGVVTVTTIGYGDKVP. The Extracellular segment spans residues 311-312; that stretch reads QT. Residues 313–338 traverse the membrane as a helical segment; sequence WIGKTIASCFSVFAISFFALPAGILG. Topologically, residues 339 to 652 are cytoplasmic; the sequence is SGFALKVQQK…VPRMTQDNIS (314 aa). Residues 360–372 are interaction with CALM; it reads AAASLIQTAWRCY. Positions 393 to 419 are disordered; it reads HHLMSPSPKPKKSAMVKKKKIRTERDE. Over residues 401 to 414 the composition is skewed to basic residues; sequence KPKKSAMVKKKKIR. Positions 504–518 are interaction with CALM; calcium-dependent; the sequence is KVIRRMQYFVAKKKF. The interval 524-561 is interaction with KCNE1 C-terminus; sequence PYDVRDVIEQYSQGHLNLMVRIKELQRRLDQSLGKPSL. Residues 577 to 605 form an interaction with AKAP9 region; that stretch reads IGSRLNRVEDKVTQMDHKLNLITDMLHHL. Residues 578–609 are C-terminal assembly domain (tetramerization); the sequence is GSRLNRVEDKVTQMDHKLNLITDMLHHLLTNQ. The segment at 609 to 652 is disordered; the sequence is QQGSQSIRTPHRSNSLNSENHPSRNTLPTYEQLNVPRMTQDNIS.

It belongs to the potassium channel family. KQT (TC 1.A.1.15) subfamily. Kv7.1/KCNQ1 sub-subfamily. Tetramer. Heterotetramer with KCNE1; targets to the membrane raft. Interacts (via C-terminus) with CALM; forms a heterotetramer in a calcium-independent manner. Interacts with KCNE2; form a heterooligomer complex that targets to the membrane raft and leading to currents with an apparently instantaneous activation, a rapid deactivation process and a linear current-voltage relationship and decreases the amplitude of the outward current. Interacts with KCNE3; four KCNE3 molecules are bound to one KCNQ1 tetramer (4:4 KCNQ1:KCNE3 stoichiometry); alters membrane raft localization; affects KCNQ1 structure and gating properties. Interacts with KCNE4; impairs KCNQ1 localization in lipid rafts and inhibits voltage-gated potassium channel activity. Interacts with KCNE5; impairs KCNQ1 localization in lipid rafts and only conducts current upon strong and continued depolarization.

It is found in the cell membrane. The protein resides in the cytoplasmic vesicle membrane. It localises to the membrane raft. The protein localises to the endoplasmic reticulum. Its subcellular location is the basolateral cell membrane. It carries out the reaction K(+)(in) = K(+)(out). PIP2 molecule is essential to activate KCNQ channels by inducing the coupling of the voltage-sensing domain (VSD) and the pore-forming domain (PD). Upon channel activation, PIP2 disrupts the VSD-calmodulin/CALM interactions, causing the release of CALM from the VSD which triggers the opening of the gate. Calcium potentiates KCNQ1 channel current through calcium-bound CALM. Calcium-bound CALM competes with PIP2 to stabilize the channel open state. Pore-forming subunit of the voltage-gated potassium (Kv) channel involved in the regulation of cardiomyocyte excitability and important in normal development and functions of myocardium, inner ear, stomach and colon. Associates with KCNE beta subunits that modulates current kinetics. Induces a voltage-dependent by rapidly activating and slowly deactivating potassium-selective outward current. Also promotes a delayed voltage activated potassium current showing outward rectification characteristic. During beta-adrenergic receptor stimulation participates in cardiac repolarization by associating with KCNE1 to form the I(Ks) cardiac potassium current that increases the amplitude and slows down the activation kinetics of outward potassium current I(Ks). When associated with KCNE3, forms the potassium channel that is important for cyclic AMP-stimulated intestinal secretion of chloride ions. When associated with KCNE2, forms a heterooligomer complex leading to currents with an apparently instantaneous activation, a rapid deactivation process and a linear current-voltage relationship and decreases the amplitude of the outward current. When associated with KCNE4, inhibits voltage-gated potassium channel activity. When associated with KCNE5, this complex only conducts current upon strong and continued depolarization. This Xenopus laevis (African clawed frog) protein is Potassium voltage-gated channel subfamily KQT member 1.